Consider the following 3907-residue polypeptide: Cyclo-acetoacetyl-L-tryptophan synthase (3907 aa).

The region spanning 2 to 436 (KTPIAVVGTA…GTNAHAIIES (435 aa)) is the Ketosynthase family 3 (KS3) domain. Catalysis depends on for beta-ketoacyl synthase activity residues Cys176, His313, and His356. The segment at 555–870 (IFTGQGAQWA…SLLRRGQNDL (316 aa)) is malonyl-CoA:ACP transacylase (MAT) domain. Residues 937–1074 (HPLLGRRSAD…ARLTLHLGDA (138 aa)) are N-terminal hotdog fold. The tract at residues 937 to 1236 (HPLLGRRSAD…GLVMKSVPQP (300 aa)) is dehydratase (DH) domain. In terms of domain architecture, PKS/mFAS DH spans 937–1239 (HPLLGRRSAD…MKSVPQPDTS (303 aa)). Residues 1092–1239 (LAPVDVADLY…MKSVPQPDTS (148 aa)) form a C-terminal hotdog fold region. Residues 1386–1573 (AAMFSQLSKD…FSGIDHIFHD (188 aa)) form a methyltransferase (MT) domain region. Residues 2064-2238 (GTYFMIDMAT…VGSVMALGMV (175 aa)) form a ketoreductase (KR)domain region. The tract at residues 2324–2352 (TKEGQYAEQEDSPSLLVPDEQLQESGPGR) is disordered. A Carrier 1 domain is found at 2356-2430 (DDLLARLSGK…LCEKAVPKPN (75 aa)). Ser2390 bears the O-(pantetheine 4'-phosphoryl)serine mark. Residues 2504 to 2926 (MSPHQSQIWF…SSNPLISVQS (423 aa)) form a condensation region. Residues 2959 to 3359 (FQDMVDQYGD…GSLILLGRMD (401 aa)) are adenylation. The Carrier 2 domain occupies 3474-3549 (KRLTLGEGEL…QMALKVDARK (76 aa)). Ser3509 is modified (O-(pantetheine 4'-phosphoryl)serine). Residues 3594 to 3813 (LTGSTSFLGR…DFQKVEIIAE (220 aa)) are reductase (RED) domain.

This sequence in the C-terminal section; belongs to the NRP synthetase family.

It carries out the reaction L-tryptophan + malonyl-CoA + acetyl-CoA = cyclo-acetoacetyl-L-tryptophan + CO2 + 2 CoA + H2O. The protein operates within secondary metabolite biosynthesis. Hybrid PKS-NRPS synthetase; part of the gene cluster that mediates the biosynthesis of the fungal neurotoxin cyclopiazonic acid (CPA), a nanomolar inhibitor of Ca(2+)-ATPase with a unique pentacyclic indole tetramic acid scaffold. The hybrid two module polyketide synthase-nonribosomal peptide synthetase (PKS-NRPS) cpaS incorporates acetyl-CoA, malonyl-CoA, and tryptophan (Trp) and utilizes a C-terminal redox-incompetent reductase domain to make and release the tryptophan tetramic acid, cyclo-acetoacetyl-L-tryptophan (c-AATrp), as the first intermediate in the pathway. CpaS catalyzes a Dieckmann-type cyclization on the N-acetoacetyl-Trp intermediate bound in thioester linkage to the phosphopantetheinyl arm of the T domain to form and release c-AATrp. CpaD then regiospecifically dimethylallylates c-AATrp to form beta-cyclopiazonic acid. CpaD discriminates against free Trp but accepts tryptophan-containing thiohydantoins, diketopiperazines, and linear peptides as substrates for C4-prenylation and also acts as regiospecific O-dimethylallyltransferase (DMAT) on a tyrosine-derived tetramic acid. The beta-cyclopiazonate dehydrogenase cpaO then carries out the dehydrogenation of beta-CPA to yield an unstable enimine product, which is captured by intramolecular cyclization to create the pentacyclic fused scaffold of alpha-cyclopiazonate. Finally, the cytochrome P450 monooxygenase cpaH mediates the conversion of CPA into the less toxic 2-oxocyclopiazonic acid, the end product of the CPA pathway in A.oryza. In Aspergillus oryzae (Yellow koji mold), this protein is Cyclo-acetoacetyl-L-tryptophan synthase.